We begin with the raw amino-acid sequence, 268 residues long: MAGELRIMENKSREDINLSPVSKIEIYSFFDPFSSDCFKLSAILSKLRIEYNQYIRIRHILNPSLKVLTKCQAQSTSNFDNIALAYKAAELQGRVRVERFIHLMQNEIIPKRDIITESMICDCIQNAGIDLEVFKDDLQKSKLTESLKIDLHIAREMEIEQAPSLVFFSEDVHEEGLKVEGLYPYHIYTYIINELMGKPIEKNLPPKLETYIQQQQLVTMEELLTIYEWPEKLLNKELKKLAIQQKIEKLKYPDGDFWKSKMPKIKSK.

Belongs to the SpxH family. In terms of assembly, interacts with Spx.

Its subcellular location is the cytoplasm. Adapter protein required for efficient degradation of Spx by ClpXP under non-stress conditions. Interaction with Spx stabilizes Spx and exposes the C-terminus of Spx for recognition and proteolysis by ClpXP. The sequence is that of ClpXP adapter protein SpxH from Staphylococcus aureus (strain COL).